We begin with the raw amino-acid sequence, 212 residues long: Prolactin-3C1 (212 aa).

The signal sequence occupies residues 1-29; it reads MQLSLTQARTWKGLFLLVSCMFLWVYVTA. A disulfide bridge connects residues Cys80 and Cys188. Residue Asn100 is glycosylated (N-linked (GlcNAc...) asparagine).

The protein belongs to the somatotropin/prolactin family. In terms of tissue distribution, expressed exclusively in decidua.

The protein resides in the secreted. This is Prolactin-3C1 (Prl3c1) from Mus musculus (Mouse).